The following is a 679-amino-acid chain: Glycine--tRNA ligase beta subunit (679 aa).

It belongs to the class-II aminoacyl-tRNA synthetase family. As to quaternary structure, tetramer of two alpha and two beta subunits.

The protein resides in the cytoplasm. It carries out the reaction tRNA(Gly) + glycine + ATP = glycyl-tRNA(Gly) + AMP + diphosphate. This is Glycine--tRNA ligase beta subunit from Thermodesulfovibrio yellowstonii (strain ATCC 51303 / DSM 11347 / YP87).